The following is a 121-amino-acid chain: Transposase InsC for insertion element IS2A (121 aa).

The protein belongs to the transposase 8 family.

Involved in the transposition of the insertion sequence IS2. This is Transposase InsC for insertion element IS2A (insC1) from Escherichia coli (strain K12).